A 317-amino-acid polypeptide reads, in one-letter code: Apolipoprotein E (317 aa).

The signal sequence occupies residues M1–A18. O-linked (GalNAc...) threonine glycosylation is found at T26 and T36. 8 consecutive repeat copies span residues A80 to T101, P102 to G123, A124 to G145, Q146 to L167, R168 to E189, R190 to A211, T212 to R233, and A234 to A255. Positions A80–A255 are 8 X 22 AA approximate tandem repeats. N-linked (Glc) (glycation) lysine glycosylation is present at K93. A Methionine sulfoxide modification is found at M143. S147 is modified (phosphoserine; by FAM20C). The LDL and other lipoprotein receptors binding stretch occupies residues H158–R168. L162–R165 serves as a coordination point for heparin. The tract at residues A210 to M290 is lipid-binding and lipoprotein association. O-linked (GalNAc...) threonine glycosylation is present at T212. A heparin-binding site is contributed by G229 to M236. Residues Q266–H317 form a homooligomerization region. The specificity for association with VLDL stretch occupies residues R278–M290. O-linked (GalNAc...) threonine glycosylation is present at T307. S308 and S314 each carry an O-linked (GalNAc...) serine glycan.

It belongs to the apolipoprotein A1/A4/E family. In terms of assembly, homotetramer. May interact with ABCA1; functionally associated with ABCA1 in the biogenesis of HDLs. May interact with APP/A4 amyloid-beta peptide; the interaction is extremely stable in vitro but its physiological significance is unclear. May interact with MAPT. May interact with MAP2. In the cerebrospinal fluid, interacts with secreted SORL1. Interacts with PMEL; this allows the loading of PMEL luminal fragment on ILVs to induce fibril nucleation. (Microbial infection) Interacts with hepatitis C virus (HCV) envelope glycoprotein E2; this interaction is required for HCV infectivity and production. In terms of processing, APOE exists as multiple glycosylated and sialylated glycoforms within cells and in plasma. The extent of glycosylation and sialylation are tissue and context specific. Plasma APOE undergoes desialylation and is less glycosylated and sialylated than the cellular form. Glycosylation is not required for proper expression and secretion. O-glycosylated with core 1 or possibly core 8 glycans. Thr-307 and Ser-314 are minor glycosylation sites compared to Ser-308. Glycated in plasma VLDL of normal subjects, and of hyperglycemic diabetic patients at a higher level (2-3 fold). Post-translationally, phosphorylated by FAM20C in the extracellular medium. In terms of processing, undergoes C-terminal proteolytic processing in neurons. C-terminally truncated APOE has a tendency to form neurotoxic intracellular neurofibrillary tangle-like inclusions in neurons. In terms of tissue distribution, produced by several tissues and cell types and mainly found associated with lipid particles in the plasma, the interstitial fluid and lymph. Mainly synthesized by liver hepatocytes. Significant quantities are also produced in brain, mainly by astrocytes and glial cells in the cerebral cortex, but also by neurons in frontal cortex and hippocampus. It is also expressed by cells of the peripheral nervous system. Also expressed by adrenal gland, testis, ovary, skin, kidney, spleen and adipose tissue and macrophages in various tissues.

The protein resides in the secreted. Its subcellular location is the extracellular space. The protein localises to the extracellular matrix. It is found in the extracellular vesicle. It localises to the endosome. The protein resides in the multivesicular body. In terms of biological role, APOE is an apolipoprotein, a protein associating with lipid particles, that mainly functions in lipoprotein-mediated lipid transport between organs via the plasma and interstitial fluids. APOE is a core component of plasma lipoproteins and is involved in their production, conversion and clearance. Apolipoproteins are amphipathic molecules that interact both with lipids of the lipoprotein particle core and the aqueous environment of the plasma. As such, APOE associates with chylomicrons, chylomicron remnants, very low density lipoproteins (VLDL) and intermediate density lipoproteins (IDL) but shows a preferential binding to high-density lipoproteins (HDL). It also binds a wide range of cellular receptors including the LDL receptor/LDLR, the LDL receptor-related proteins LRP1, LRP2 and LRP8 and the very low-density lipoprotein receptor/VLDLR that mediate the cellular uptake of the APOE-containing lipoprotein particles. Finally, APOE also has a heparin-binding activity and binds heparan-sulfate proteoglycans on the surface of cells, a property that supports the capture and the receptor-mediated uptake of APOE-containing lipoproteins by cells. A main function of APOE is to mediate lipoprotein clearance through the uptake of chylomicrons, VLDLs, and HDLs by hepatocytes. APOE is also involved in the biosynthesis by the liver of VLDLs as well as their uptake by peripheral tissues ensuring the delivery of triglycerides and energy storage in muscle, heart and adipose tissues. By participating in the lipoprotein-mediated distribution of lipids among tissues, APOE plays a critical role in plasma and tissues lipid homeostasis. APOE is also involved in two steps of reverse cholesterol transport, the HDLs-mediated transport of cholesterol from peripheral tissues to the liver, and thereby plays an important role in cholesterol homeostasis. First, it is functionally associated with ABCA1 in the biogenesis of HDLs in tissues. Second, it is enriched in circulating HDLs and mediates their uptake by hepatocytes. APOE also plays an important role in lipid transport in the central nervous system, regulating neuron survival and sprouting. APOE is also involved in innate and adaptive immune responses, controlling for instance the survival of myeloid-derived suppressor cells. Binds to the immune cell receptor LILRB4. APOE may also play a role in transcription regulation through a receptor-dependent and cholesterol-independent mechanism, that activates MAP3K12 and a non-canonical MAPK signal transduction pathway that results in enhanced AP-1-mediated transcription of APP. (Microbial infection) Through its interaction with HCV envelope glycoprotein E2, participates in the attachment of HCV to HSPGs and other receptors (LDLr, VLDLr, and SR-B1) on the cell surface and to the assembly, maturation and infectivity of HCV viral particles. This interaction is probably promoted via the up-regulation of cellular autophagy by the virus. This Homo sapiens (Human) protein is Apolipoprotein E.